The chain runs to 246 residues: Complement C1q tumor necrosis factor-related protein 3 (246 aa).

Residues 1–22 (MLGRQRIWWHLLPLLFLPFCLC) form the signal peptide. The region spanning 51–113 (GYQGPPGPPG…KGEKGYPGVP (63 aa)) is the Collagen-like domain. The interval 53–112 (QGPPGPPGPPGIPGNHGNNGNNGATGHEGAKGEKGDKGDLGPRGERGQHGPKGEKGYPGV) is disordered. Over residues 55–64 (PPGPPGPPGI) the composition is skewed to pro residues. The span at 65–74 (PGNHGNNGNN) shows a compositional bias: low complexity. A compositionally biased stretch (basic and acidic residues) spans 80–107 (EGAKGEKGDKGDLGPRGERGQHGPKGEK). A C1q domain is found at 113 to 246 (PPELQIAFMA…FAGFLLFETK (134 aa)).

Its subcellular location is the secreted. This Mus musculus (Mouse) protein is Complement C1q tumor necrosis factor-related protein 3 (C1qtnf3).